The primary structure comprises 355 residues: 6-aminohexanoate-oligomer endohydrolase (355 aa).

Threonine 267 functions as the Nucleophile in the catalytic mechanism.

This sequence belongs to the peptidase S58 family. In terms of assembly, heterotetramer composed of 4 alpha/beta heterodimers. Expressed as an inactive precursor that is cleaved autocatalytically at Asn266/Thr267 to generate an active enzyme composed of an alpha subunit and a beta subunit.

The catalysed reaction is [N-(6-aminohexanoyl)]n + H2O = [N-(6-aminohexanoyl)]n-x + [N-(6-aminohexanoyl)]x.. It participates in xenobiotic degradation; nylon-6 oligomer degradation. Functionally, involved in the degradation of nylon-6 oligomers. Degrades cyclic and linear oligomers of 6-aminohexanoate (Ahx) with a degree of polymerization greater than three by an endo-type mode. Cannot use Ahx cyclic dimer or the Ahx linear dimer. The chain is 6-aminohexanoate-oligomer endohydrolase from Kocuria sp. (strain KY2).